A 307-amino-acid polypeptide reads, in one-letter code: Protoheme IX farnesyltransferase (307 aa).

A run of 8 helical transmembrane segments spans residues 32–52, 65–85, 108–128, 131–151, 158–178, 186–206, 251–271, and 287–307; these read MGIV…ALHF, FFTI…NNYI, PGFA…FLLL, PMAV…YSLW, LNTV…WAAI, IAWM…LALA, LGIT…VLGF, and FVYS…VTFF.

This sequence belongs to the UbiA prenyltransferase family. Protoheme IX farnesyltransferase subfamily. In terms of assembly, interacts with CtaA.

The protein resides in the cell membrane. It catalyses the reaction heme b + (2E,6E)-farnesyl diphosphate + H2O = Fe(II)-heme o + diphosphate. It functions in the pathway porphyrin-containing compound metabolism; heme O biosynthesis; heme O from protoheme: step 1/1. In terms of biological role, converts heme B (protoheme IX) to heme O by substitution of the vinyl group on carbon 2 of heme B porphyrin ring with a hydroxyethyl farnesyl side group. This Bacillus cereus (strain G9842) protein is Protoheme IX farnesyltransferase.